Here is a 146-residue protein sequence, read N- to C-terminus: Large ribosomal subunit protein uL15 (146 aa).

The disordered stretch occupies residues 1–64 (MQLNTIKPAI…MPMHRRLPKR (64 aa)). Residues 30–39 (TATKGHKGQK) show a composition bias toward basic residues.

Belongs to the universal ribosomal protein uL15 family. As to quaternary structure, part of the 50S ribosomal subunit.

In terms of biological role, binds to the 23S rRNA. This Geobacter sp. (strain M21) protein is Large ribosomal subunit protein uL15.